Here is a 200-residue protein sequence, read N- to C-terminus: Cuticle protein 21.3 (200 aa).

10 tandem repeats follow at residues 98-101, 104-107, 116-119, 121-124, 133-136, 154-157, 166-169, 178-181, 184-187, and 196-199.

Component of the cuticle of migratory locust which contains more than 100 different structural proteins. This is Cuticle protein 21.3 from Locusta migratoria (Migratory locust).